Here is a 317-residue protein sequence, read N- to C-terminus: Glutathione synthetase (317 aa).

Residues 124–310 enclose the ATP-grasp domain; that stretch reads EKLFTAWFPE…ITGKLMDAIE (187 aa). 150 to 207 contacts ATP; it reads FRQEHGDIILKPLDGMGGASIFRVKENDPNVSVIIETLTNHGQNYAMAQTFVPDISNG. Mg(2+) is bound by residues Glu-281 and Asn-283.

Belongs to the prokaryotic GSH synthase family. Mg(2+) serves as cofactor. Mn(2+) is required as a cofactor.

The catalysed reaction is gamma-L-glutamyl-L-cysteine + glycine + ATP = glutathione + ADP + phosphate + H(+). Its pathway is sulfur metabolism; glutathione biosynthesis; glutathione from L-cysteine and L-glutamate: step 2/2. The polypeptide is Glutathione synthetase (Vibrio vulnificus (strain CMCP6)).